We begin with the raw amino-acid sequence, 355 residues long: tRNA uridine(34) hydroxylase (355 aa).

A Rhodanese domain is found at 146–240 (DDPDTLFVDM…YARKAKEQGL (95 aa)). C200 acts as the Cysteine persulfide intermediate in catalysis. Positions 333–355 (NKSKGLLQATMHIPSPEKSADEK) are disordered.

The protein belongs to the TrhO family.

It catalyses the reaction uridine(34) in tRNA + AH2 + O2 = 5-hydroxyuridine(34) in tRNA + A + H2O. Its function is as follows. Catalyzes oxygen-dependent 5-hydroxyuridine (ho5U) modification at position 34 in tRNAs. This is tRNA uridine(34) hydroxylase from Yersinia pseudotuberculosis serotype O:1b (strain IP 31758).